The primary structure comprises 361 residues: Phospho-N-acetylmuramoyl-pentapeptide-transferase (361 aa).

Helical transmembrane passes span Leu-28–Leu-48, Thr-73–Leu-93, Met-98–Leu-118, Tyr-132–Pro-152, Trp-168–Ser-188, Gly-199–Ser-219, Gly-235–Trp-255, Val-263–Ile-283, Ile-288–Val-308, and Lys-338–Leu-358.

This sequence belongs to the glycosyltransferase 4 family. MraY subfamily. It depends on Mg(2+) as a cofactor.

The protein localises to the cell inner membrane. The enzyme catalyses UDP-N-acetyl-alpha-D-muramoyl-L-alanyl-gamma-D-glutamyl-meso-2,6-diaminopimeloyl-D-alanyl-D-alanine + di-trans,octa-cis-undecaprenyl phosphate = di-trans,octa-cis-undecaprenyl diphospho-N-acetyl-alpha-D-muramoyl-L-alanyl-D-glutamyl-meso-2,6-diaminopimeloyl-D-alanyl-D-alanine + UMP. It participates in cell wall biogenesis; peptidoglycan biosynthesis. Its function is as follows. Catalyzes the initial step of the lipid cycle reactions in the biosynthesis of the cell wall peptidoglycan: transfers peptidoglycan precursor phospho-MurNAc-pentapeptide from UDP-MurNAc-pentapeptide onto the lipid carrier undecaprenyl phosphate, yielding undecaprenyl-pyrophosphoryl-MurNAc-pentapeptide, known as lipid I. This is Phospho-N-acetylmuramoyl-pentapeptide-transferase from Thermodesulfovibrio yellowstonii (strain ATCC 51303 / DSM 11347 / YP87).